We begin with the raw amino-acid sequence, 1912 residues long: Vitellogenin-1 (1912 aa).

Positions 1 to 15 (MRGLISALVLTLVGS) are cleaved as a signal peptide. A Vitellogenin domain is found at 24 to 663 (FGENKVYTYN…AGSLIPTMAV (640 aa)). An N-linked (GlcNAc...) asparagine glycan is attached at Asn163. Positions 948-972 (DSASGETDNIRDRQSVEDVSSGNSF) are disordered. The N-linked (GlcNAc...) asparagine glycan is linked to Asn991. Disordered regions lie at residues 1080–1329 (KILD…SYDI) and 1351–1432 (HWHS…RERN). Composition is skewed to low complexity over residues 1092–1124 (NSRS…NRAS) and 1150–1235 (SSSS…SSSK). A glycan (N-linked (GlcNAc...) asparagine) is linked at Asn1206. Basic and acidic residues predominate over residues 1259–1269 (EGERSVHEQKQ). A compositionally biased stretch (low complexity) spans 1273–1299 (SSSSSSSRASSNSRSTSSSTSSSSESS). The span at 1306 to 1316 (WKQDREAETKR) shows a compositional bias: basic and acidic residues. The segment covering 1319–1328 (SQFNSHSSYD) has biased composition (polar residues). Low complexity predominate over residues 1357-1381 (RTSSSSSSSSSESGSSHSNSSSSDS). Asn1375 carries an N-linked (GlcNAc...) asparagine glycan. Residues 1397-1409 (SHRHGEKAAHSSR) are compositionally biased toward basic residues. One can recognise a VWFD domain in the interval 1640 to 1818 (STCEVSKGDF…SWVLLEETCS (179 aa)). Intrachain disulfides connect Cys1642-Cys1781 and Cys1665-Cys1817. 3 N-linked (GlcNAc...) asparagine glycosylation sites follow: Asn1662, Asn1698, and Asn1703.

Phosvitin, an egg yolk storage protein, is one of the most highly phosphorylated (10%) proteins in nature. Post-translationally, cathepsin D is responsible for intraoocytic processing of vitellogenin. In terms of processing, may contain intrachain disulfide bonds. In terms of tissue distribution, produced by the liver, secreted into the blood and then sequestered by receptor mediated endocytosis into growing oocytes, where it is generally cleaved, giving rise to the respective yolk components.

In terms of biological role, precursor of the egg-yolk proteins that are sources of nutrients during early development of oviparous organisms. Phosvitin is believed to be of importance in sequestering calcium, iron and other cations for the developing embryo. The sequence is that of Vitellogenin-1 (VTG1) from Gallus gallus (Chicken).